Reading from the N-terminus, the 282-residue chain is Pantothenate synthetase (282 aa).

26-33 (MGNLHEGH) contacts ATP. Residue H33 is the Proton donor of the active site. Q57 is a (R)-pantoate binding site. A beta-alanine-binding site is contributed by Q57. 144 to 147 (GKKD) is a binding site for ATP. Position 150 (Q150) interacts with (R)-pantoate. Residues V173 and 181-184 (LSSR) each bind ATP.

The protein belongs to the pantothenate synthetase family. As to quaternary structure, homodimer.

It localises to the cytoplasm. It carries out the reaction (R)-pantoate + beta-alanine + ATP = (R)-pantothenate + AMP + diphosphate + H(+). It functions in the pathway cofactor biosynthesis; (R)-pantothenate biosynthesis; (R)-pantothenate from (R)-pantoate and beta-alanine: step 1/1. Functionally, catalyzes the condensation of pantoate with beta-alanine in an ATP-dependent reaction via a pantoyl-adenylate intermediate. The sequence is that of Pantothenate synthetase from Cupriavidus taiwanensis (strain DSM 17343 / BCRC 17206 / CCUG 44338 / CIP 107171 / LMG 19424 / R1) (Ralstonia taiwanensis (strain LMG 19424)).